We begin with the raw amino-acid sequence, 110 residues long: UPF0060 membrane protein Dtpsy_1668 (110 aa).

The next 4 helical transmembrane spans lie at 7-27 (LALFLLTAVAEIVGCYLPWLW), 33-53 (SAWLLVPAAASLALFAWLLTL), 63-83 (AAYGGVYVAVALVWLWTVDGV), and 86-106 (GPWDWLGVSVTLCGMAIIAFA).

Belongs to the UPF0060 family.

The protein localises to the cell inner membrane. In Acidovorax ebreus (strain TPSY) (Diaphorobacter sp. (strain TPSY)), this protein is UPF0060 membrane protein Dtpsy_1668.